A 1710-amino-acid chain; its full sequence is Neurexin-2 (1710 aa).

The signal sequence occupies residues 1-28 (MALGSRWQPPPQLPPLLLLLALAAGVRG). The Laminin G-like 1 domain occupies 29-206 (LEFGGGPGQW…LRGAAADPLC (178 aa)). Over 29 to 1634 (LEFGGGPGQW…EVIRESSSTT (1606 aa)) the chain is Extracellular. Asn-60 carries an N-linked (GlcNAc...) asparagine glycan. An EGF-like 1 domain is found at 202-242 (ADPLCAPARNPCANGGLCTVLAPGEVGCDCSHTGFGGKFCS). Disulfide bonds link Cys-206–Cys-219, Cys-213–Cys-229, and Cys-231–Cys-241. 2 Laminin G-like domains span residues 289–486 (VATF…SFRC) and 493–686 (DPVT…APFC). Asp-335 contributes to the Ca(2+) binding site. Asn-338 is a glycosylation site (N-linked (GlcNAc...) asparagine). 2 residues coordinate Ca(2+): Leu-352 and Met-420. 5 cysteine pairs are disulfide-bonded: Cys-450-Cys-486, Cys-657-Cys-686, Cys-694-Cys-705, Cys-699-Cys-714, and Cys-716-Cys-726. The EGF-like 2 domain maps to 690–727 (TLKQCASAPCRNGGICREGWNRFVCDCIGTGFLGRVCE). 2 Laminin G-like domains span residues 732–904 (VLSY…ITYC) and 918–1093 (DPVT…ERGC). Ca(2+) is bound by residues Asp-779 and Leu-796. An N-linked (GlcNAc...) asparagine glycan is attached at Asn-841. Residue Arg-854 participates in Ca(2+) binding. Cystine bridges form between Cys-1065/Cys-1093, Cys-1100/Cys-1111, Cys-1105/Cys-1120, and Cys-1122/Cys-1132. The EGF-like 3 domain occupies 1096–1133 (PSTTCTEESCANQGVCLQQWDGFTCDCTMTSYGGPVCN). In terms of domain architecture, Laminin G-like 6 spans 1137–1345 (TTYIFGKGGA…HLRLVGEGPS (209 aa)). Ca(2+) is bound by residues Asp-1189, Val-1206, Ile-1288, and Asn-1290. O-linked (Xyl...) (heparan sulfate) serine glycosylation occurs at Ser-1400. Disordered regions lie at residues 1458-1508 (ATQD…LPPT) and 1587-1621 (EPRR…RGPP). The helical transmembrane segment at 1635–1655 (GMVVGIVAAAALCILILLYAM) threads the bilayer. The Cytoplasmic portion of the chain corresponds to 1656 to 1710 (YKYRNRDEGSYQVDQSRNYISNSAQSNGAVVKEKAPAAPKTPSKAKKNKDKEYYV). The disordered stretch occupies residues 1677–1710 (NSAQSNGAVVKEKAPAAPKTPSKAKKNKDKEYYV).

In terms of assembly, the laminin G-like domain 1 binds to NXPH1. Interacts with PATJ. Interacts with CBLN1, CBLN2 and, less avidly, with CBLN4. Specific isoforms bind neuroligins NLGN1, NLGN2 and NLGN3. Specific isoforms bind to alpha-dystroglycan. Interacts (via Laminin G-like 1 domain) with IGSF21 (Ig-like 1 domain) in a trans-interaction manner. Interacts with CLSTN3. In terms of processing, O-glycosylated; contains heparan sulfate. Heparan sulfate attachment is required for synapse development by mediating interactions with neuroligins.

It is found in the presynaptic cell membrane. Its function is as follows. Neuronal cell surface protein that may be involved in cell recognition and cell adhesion. May mediate intracellular signaling. The protein is Neurexin-2 of Mus musculus (Mouse).